The sequence spans 445 residues: Gamma-glutamyl phosphate reductase (445 aa).

This sequence belongs to the gamma-glutamyl phosphate reductase family.

The protein localises to the cytoplasm. It carries out the reaction L-glutamate 5-semialdehyde + phosphate + NADP(+) = L-glutamyl 5-phosphate + NADPH + H(+). It functions in the pathway amino-acid biosynthesis; L-proline biosynthesis; L-glutamate 5-semialdehyde from L-glutamate: step 2/2. In terms of biological role, catalyzes the NADPH-dependent reduction of L-glutamate 5-phosphate into L-glutamate 5-semialdehyde and phosphate. The product spontaneously undergoes cyclization to form 1-pyrroline-5-carboxylate. The chain is Gamma-glutamyl phosphate reductase from Saccharopolyspora erythraea (strain ATCC 11635 / DSM 40517 / JCM 4748 / NBRC 13426 / NCIMB 8594 / NRRL 2338).